A 422-amino-acid chain; its full sequence is Serine--tRNA ligase (422 aa).

Position 238–240 (238–240) interacts with L-serine; it reads TSE. 269 to 271 contacts ATP; the sequence is RKE. L-serine is bound at residue Glu292. Residue 356 to 359 participates in ATP binding; sequence EISS. Ser390 is an L-serine binding site.

This sequence belongs to the class-II aminoacyl-tRNA synthetase family. Type-1 seryl-tRNA synthetase subfamily. As to quaternary structure, homodimer. The tRNA molecule binds across the dimer.

It localises to the cytoplasm. It carries out the reaction tRNA(Ser) + L-serine + ATP = L-seryl-tRNA(Ser) + AMP + diphosphate + H(+). The catalysed reaction is tRNA(Sec) + L-serine + ATP = L-seryl-tRNA(Sec) + AMP + diphosphate + H(+). Its pathway is aminoacyl-tRNA biosynthesis; selenocysteinyl-tRNA(Sec) biosynthesis; L-seryl-tRNA(Sec) from L-serine and tRNA(Sec): step 1/1. Its function is as follows. Catalyzes the attachment of serine to tRNA(Ser). Is also able to aminoacylate tRNA(Sec) with serine, to form the misacylated tRNA L-seryl-tRNA(Sec), which will be further converted into selenocysteinyl-tRNA(Sec). In Helicobacter hepaticus (strain ATCC 51449 / 3B1), this protein is Serine--tRNA ligase.